The chain runs to 791 residues: MFIPQNKSKRLSLDKIGQLEEDLELNPLDYNKWQKLIDQLIIKDNQEQVRNTFDKYLKIFKFDGASWCKYIKYELNRDEKEKVENLFQQCLGITDNVELCRLYVDYVRGVTDFVTGGEKARGVVVQAFEFAINKVGIDITSESLWQDYIQFLQSWNPNANWEQQQKIDLIRKVYKKFLTIPTENIEVSWSQYTKWENELNPATASKFISEKSGEFMLARSWNTEFNRITDKSLKRNLNPGDHNDEDVVKQLKYWLRWLELEKENKLELKDETVNDKRIQYVYKQATYALPFVPEIWFQYVKYLLVQNEEGNLQESIRLLKEGGLVLNPKSMLLTFQLAELYERDNSFNNAKIVFKNLLDALQKDYNSVANQIAELKERIDPATDKDNIQEDDDDNEEEEEEENDNDNDNDNGGDSKQQPPSKKLKLNPNGGQNGSNSENNGEAVSAPSSSVKLPQVYRISLADSKQLLSFENEQKRLSDAITLTYVKFMIASKRSEGIKEARNVFKQARKFTDIGYQIFIESALLEHYSDKKSTALKIFDLGKKNFATNGKFLLNYLDYLIMINDVDTMRTVIQSSDANFTKEIGNLQEELKLTNLDPITRKKLEKQITNLKKFLKQLYKKYISFAATFLSLDVTHSFAKKCEQLFPKDDPIDLFTDRYKLDNINIIKKDELGRDDILTSFDGIIDEEELQRLKRRKLSNGSGSSSSYSFNEEESKSAIKNIEEQKTRVQQEQDQENQGINKPEESFVGPSIIALMSALPNASYFGLPSESVFNSEKLVTLFANLSNIPSQ.

6 HAT repeats span residues 44-76, 78-112, 119-154, 165-198, 231-263, and 273-305; these read DNQEQVRNTFDKYLKIFKFDGASWCKYIKYELN, DEKEKVENLFQQCLGITDNVELCRLYVDYVRGVTD, KARGVVVQAFEFAINKVGIDITSESLWQDYIQFLQS, QKIDLIRKVYKKFLTIPTENIEVSWSQYTKWENE, KSLKRNLNPGDHNDEDVVKQLKYWLRWLELEKE, and VNDKRIQYVYKQATYALPFVPEIWFQYVKYLLV. Residues 379–388 show a composition bias toward basic and acidic residues; sequence IDPATDKDNI. 2 disordered regions span residues 379–449 and 725–745; these read IDPA…APSS and QKTRVQQEQDQENQGINKPEE. Acidic residues predominate over residues 389-411; the sequence is QEDDDDNEEEEEEENDNDNDNDN. Over residues 427-442 the composition is skewed to low complexity; the sequence is NPNGGQNGSNSENNGE.

It localises to the nucleus. Its subcellular location is the cytoplasm. In terms of biological role, component of the cleavage factor IA (CFIA) complex, which is involved in the endonucleolytic cleavage during polyadenylation-dependent pre-mRNA 3'-end formation. The sequence is that of mRNA 3'-end-processing protein RNA14 (RNA14) from Candida albicans (strain SC5314 / ATCC MYA-2876) (Yeast).